The chain runs to 137 residues: Small ribosomal subunit protein uS12 (137 aa).

2 disordered regions span residues Met-1–Ser-21 and Lys-33–Lys-57. At Asp-102 the chain carries 3-methylthioaspartic acid.

Belongs to the universal ribosomal protein uS12 family. As to quaternary structure, part of the 30S ribosomal subunit. Contacts proteins S8 and S17. May interact with IF1 in the 30S initiation complex.

In terms of biological role, with S4 and S5 plays an important role in translational accuracy. Its function is as follows. Interacts with and stabilizes bases of the 16S rRNA that are involved in tRNA selection in the A site and with the mRNA backbone. Located at the interface of the 30S and 50S subunits, it traverses the body of the 30S subunit contacting proteins on the other side and probably holding the rRNA structure together. The combined cluster of proteins S8, S12 and S17 appears to hold together the shoulder and platform of the 30S subunit. The protein is Small ribosomal subunit protein uS12 of Streptococcus pneumoniae (strain ATCC 700669 / Spain 23F-1).